A 694-amino-acid polypeptide reads, in one-letter code: Polyphosphate kinase (694 aa).

Asn45 contributes to the ATP binding site. Mg(2+) contacts are provided by Arg367 and Arg397. His427 serves as the catalytic Phosphohistidine intermediate. Residues Tyr460, Arg553, and His580 each contribute to the ATP site.

Belongs to the polyphosphate kinase 1 (PPK1) family. Requires Mg(2+) as cofactor. Post-translationally, an intermediate of this reaction is the autophosphorylated ppk in which a phosphate is covalently linked to a histidine residue through a N-P bond.

It catalyses the reaction [phosphate](n) + ATP = [phosphate](n+1) + ADP. Its function is as follows. Catalyzes the reversible transfer of the terminal phosphate of ATP to form a long-chain polyphosphate (polyP). The protein is Polyphosphate kinase of Campylobacter coli.